The primary structure comprises 349 residues: MATATLTIDLDAIAANWRALDQMTASDCQTGAVVKADAYGLGAAKVAHALARAGARRFFVAACEEGAEVRRALGSGPQICVFSGHMEGDTALIRDFDLTPMLNSIEQLTRHFETLGGQPFGLQLDSGMNRLGLEPGEWEAVAATALEAGPELLMSHLACADEPDHPMNTEQLRAFRAMTDGTGVPRSLSATGGILLGPAWHFELTRPGIGLYGGRPFEEARPVVHLSLPVVQVREVEIGEPVGYSNSWTAEHTSTIATVAAGYADGLPRTLSSRASLFAGRVPCPLVGRVSMDLITVDVSHLPEVPDALDILCRHQTPDDLADTAGTIGYEILTSLGRRYQRRYGALAA.

The active-site Proton acceptor; specific for D-alanine is K35. Position 35 is an N6-(pyridoxal phosphate)lysine (K35). R130 contributes to the substrate binding site. Y244 acts as the Proton acceptor; specific for L-alanine in catalysis. Substrate is bound at residue M292.

It belongs to the alanine racemase family. Pyridoxal 5'-phosphate is required as a cofactor.

The enzyme catalyses L-alanine = D-alanine. The protein operates within amino-acid biosynthesis; D-alanine biosynthesis; D-alanine from L-alanine: step 1/1. Functionally, catalyzes the interconversion of L-alanine and D-alanine. May also act on other amino acids. This Cereibacter sphaeroides (strain ATCC 17025 / ATH 2.4.3) (Rhodobacter sphaeroides) protein is Alanine racemase (alr).